Consider the following 1262-residue polypeptide: Putative late blight resistance protein homolog R1B-23 (1262 aa).

2 coiled-coil regions span residues 364–384 and 475–496; these read DSLA…ESMQ and RMNE…KLLN. Positions 475 to 761 constitute an NB-ARC domain; it reads RMNEEIVGFE…ISESFIKSCE (287 aa). 508-515 is a binding site for ATP; the sequence is GMPGLGKT. 6 LRR repeats span residues 890 to 914, 933 to 961, 1036 to 1059, 1064 to 1083, 1084 to 1112, and 1133 to 1157; these read FKFL…LFYL, LWNL…VWDM, PIRL…CISA, YLEL…TADH, LKHL…MFPQ, and FPNL…FMDI. The 68-residue stretch at 1181–1248 folds into the HMA domain; the sequence is ETQVEDNQNT…KLRNVAYADE (68 aa).

The protein belongs to the disease resistance NB-LRR family.

The protein localises to the cytoplasm. It is found in the membrane. Confers resistance to late blight (Phytophthora infestans) races carrying the avirulence gene Avr1. Resistance proteins guard the plant against pathogens that contain an appropriate avirulence protein via an indirect interaction with this avirulence protein. That triggers a defense system including the hypersensitive response, which restricts the pathogen growth. The protein is Putative late blight resistance protein homolog R1B-23 (R1B-23) of Solanum demissum (Wild potato).